Here is a 119-residue protein sequence, read N- to C-terminus: Holo-[acyl-carrier-protein] synthase (119 aa).

Residues Asp8 and Glu53 each coordinate Mg(2+).

Belongs to the P-Pant transferase superfamily. AcpS family. Requires Mg(2+) as cofactor.

The protein localises to the cytoplasm. It catalyses the reaction apo-[ACP] + CoA = holo-[ACP] + adenosine 3',5'-bisphosphate + H(+). Transfers the 4'-phosphopantetheine moiety from coenzyme A to a Ser of acyl-carrier-protein. The sequence is that of Holo-[acyl-carrier-protein] synthase from Petrotoga mobilis (strain DSM 10674 / SJ95).